The chain runs to 105 residues: T cell receptor alpha variable 40 (105 aa).

A signal peptide spans 1-19 (MNSSLDFLILILMFGGTSS). Positions 20 to 105 (NSVKQTGQIT…DSAVYYCLLG (86 aa)) constitute an Ig-like domain. Residue Asn39 is glycosylated (N-linked (GlcNAc...) asparagine). A disulfide bridge connects residues Cys40 and Cys102.

Alpha-beta TR is a heterodimer composed of an alpha and beta chain; disulfide-linked. The alpha-beta TR is associated with the transmembrane signaling CD3 coreceptor proteins to form the TR-CD3 (TcR or TCR). The assembly of alpha-beta TR heterodimers with CD3 occurs in the endoplasmic reticulum where a single alpha-beta TR heterodimer associates with one CD3D-CD3E heterodimer, one CD3G-CD3E heterodimer and one CD247 homodimer forming a stable octameric structure. CD3D-CD3E and CD3G-CD3E heterodimers preferentially associate with TR alpha and TR beta chains, respectively. The association of the CD247 homodimer is the last step of TcR assembly in the endoplasmic reticulum and is required for transport to the cell surface.

It is found in the cell membrane. Functionally, v region of the variable domain of T cell receptor (TR) alpha chain that participates in the antigen recognition. Alpha-beta T cell receptors are antigen specific receptors which are essential to the immune response and are present on the cell surface of T lymphocytes. Recognize peptide-major histocompatibility (MH) (pMH) complexes that are displayed by antigen presenting cells (APC), a prerequisite for efficient T cell adaptive immunity against pathogens. Binding of alpha-beta TR to pMH complex initiates TR-CD3 clustering on the cell surface and intracellular activation of LCK that phosphorylates the ITAM motifs of CD3G, CD3D, CD3E and CD247 enabling the recruitment of ZAP70. In turn ZAP70 phosphorylates LAT, which recruits numerous signaling molecules to form the LAT signalosome. The LAT signalosome propagates signal branching to three major signaling pathways, the calcium, the mitogen-activated protein kinase (MAPK) kinase and the nuclear factor NF-kappa-B (NF-kB) pathways, leading to the mobilization of transcription factors that are critical for gene expression and essential for T cell growth and differentiation. The T cell repertoire is generated in the thymus, by V-(D)-J rearrangement. This repertoire is then shaped by intrathymic selection events to generate a peripheral T cell pool of self-MH restricted, non-autoaggressive T cells. Post-thymic interaction of alpha-beta TR with the pMH complexes shapes TR structural and functional avidity. The polypeptide is T cell receptor alpha variable 40 (Homo sapiens (Human)).